Reading from the N-terminus, the 342-residue chain is Putative aryl-alcohol dehydrogenase AAD16 (342 aa).

Belongs to the aldo/keto reductase family. Aldo/keto reductase 2 subfamily.

Functionally, putative aryl-alcohol dehydrogenase. This Saccharomyces cerevisiae (strain ATCC 204508 / S288c) (Baker's yeast) protein is Putative aryl-alcohol dehydrogenase AAD16.